The primary structure comprises 155 residues: Small ribosomal subunit protein uS7 (155 aa).

The protein belongs to the universal ribosomal protein uS7 family. In terms of assembly, part of the 30S ribosomal subunit. Contacts proteins S9 and S11.

In terms of biological role, one of the primary rRNA binding proteins, it binds directly to 16S rRNA where it nucleates assembly of the head domain of the 30S subunit. Is located at the subunit interface close to the decoding center, probably blocks exit of the E-site tRNA. In Helicobacter hepaticus (strain ATCC 51449 / 3B1), this protein is Small ribosomal subunit protein uS7.